Consider the following 79-residue polypeptide: Sulfur carrier protein TusA (79 aa).

The Cysteine persulfide intermediate role is filled by cysteine 17.

This sequence belongs to the sulfur carrier protein TusA family.

Its subcellular location is the cytoplasm. Its function is as follows. Sulfur carrier protein which probably makes part of a sulfur-relay system. This is Sulfur carrier protein TusA from Histophilus somni (strain 129Pt) (Haemophilus somnus).